Reading from the N-terminus, the 238-residue chain is Large ribosomal subunit protein uL2 (238 aa).

The tract at residues 200-238 is disordered; the sequence is HGGGLHQSVSRPSTVSRNAPPGRKVGHIAARRTGRKEGK. Positions 206-216 are enriched in polar residues; the sequence is QSVSRPSTVSR. Residues 223–238 are compositionally biased toward basic residues; that stretch reads KVGHIAARRTGRKEGK.

Belongs to the universal ribosomal protein uL2 family. As to quaternary structure, part of the 50S ribosomal subunit. Forms a bridge to the 30S subunit in the 70S ribosome.

Its function is as follows. One of the primary rRNA binding proteins. Required for association of the 30S and 50S subunits to form the 70S ribosome, for tRNA binding and peptide bond formation. It has been suggested to have peptidyltransferase activity; this is somewhat controversial. Makes several contacts with the 16S rRNA in the 70S ribosome. The polypeptide is Large ribosomal subunit protein uL2 (Saccharolobus islandicus (strain L.S.2.15 / Lassen #1) (Sulfolobus islandicus)).